Reading from the N-terminus, the 304-residue chain is Acetyl-coenzyme A carboxylase carboxyl transferase subunit beta (304 aa).

A disordered region spans residues 16–42; that stretch reads SSLPPKNSEGGLAYFDEPSPEQESTRK. Positions 48 to 304 constitute a CoA carboxyltransferase N-terminal domain; the sequence is LWVKCPKCGE…LLRYHQEGAV (257 aa). Zn(2+) is bound by residues cysteine 52, cysteine 55, cysteine 71, and cysteine 74. The C4-type zinc finger occupies 52 to 74; sequence CPKCGEALFNKDLVENQRVCLTC.

The protein belongs to the AccD/PCCB family. Acetyl-CoA carboxylase is a heterohexamer composed of biotin carboxyl carrier protein (AccB), biotin carboxylase (AccC) and two subunits each of ACCase subunit alpha (AccA) and ACCase subunit beta (AccD). Zn(2+) is required as a cofactor.

The protein localises to the cytoplasm. It catalyses the reaction N(6)-carboxybiotinyl-L-lysyl-[protein] + acetyl-CoA = N(6)-biotinyl-L-lysyl-[protein] + malonyl-CoA. The protein operates within lipid metabolism; malonyl-CoA biosynthesis; malonyl-CoA from acetyl-CoA: step 1/1. In terms of biological role, component of the acetyl coenzyme A carboxylase (ACC) complex. Biotin carboxylase (BC) catalyzes the carboxylation of biotin on its carrier protein (BCCP) and then the CO(2) group is transferred by the transcarboxylase to acetyl-CoA to form malonyl-CoA. The sequence is that of Acetyl-coenzyme A carboxylase carboxyl transferase subunit beta from Desulfitobacterium hafniense (strain Y51).